The following is a 294-amino-acid chain: tRNA pseudouridine synthase B (294 aa).

The active-site Nucleophile is Asp38.

This sequence belongs to the pseudouridine synthase TruB family. Type 1 subfamily.

It catalyses the reaction uridine(55) in tRNA = pseudouridine(55) in tRNA. Its function is as follows. Responsible for synthesis of pseudouridine from uracil-55 in the psi GC loop of transfer RNAs. In Clostridium perfringens (strain SM101 / Type A), this protein is tRNA pseudouridine synthase B.